We begin with the raw amino-acid sequence, 1061 residues long: Protein pid-5 (1061 aa).

This sequence belongs to the peptidase M24B family. May interact with pid-2, app-1 and prmt-5.

The protein localises to the cytoplasm. It is found in the perinuclear region. The protein resides in the P-body. Functionally, together with pid-4, it is involved in gene silencing mediated by a class of 21 nucleotide PIWI-interacting RNAs (piRNAs) that possess a uracil residue at the 5'-end (also called 21U-RNAs) and guide the Piwi protein prg-1 to its DNA targets for silencing. Together with pid-4, it is required for the biogenesis of secondary and tertiary 22G-siRNAs. Specifically, promotes the production of 22G-siRNAs from the 5' end of target mRNAs. Together with pid-4, plays a role in small RNA-directed transgenerational epigenetic inheritance (also called RNAe) over several generations and germline immortality. Together with pid-4, plays a role in the formation of liquid-like condensates in the cytoplasm called Z granules. The sequence is that of Protein pid-5 from Caenorhabditis elegans.